Consider the following 85-residue polypeptide: U4-theraphotoxin-Hhn1a (85 aa).

The first 22 residues, 1 to 22 (MKVTLIAILTCAAVLVLRTTAA), serve as a signal peptide directing secretion. The propeptide occupies 23-48 (EELEAESQLMEVGMPDTELAAVDEER). Cystine bridges form between Cys52-Cys66, Cys56-Cys77, and Cys71-Cys82.

The protein belongs to the neurotoxin 12 (Hwtx-2) family. 02 (Hwtx-2) subfamily. Monomer. As to expression, expressed by the venom gland.

The protein resides in the secreted. Its function is as follows. Neurotoxin active on both insects and mammals. This is U4-theraphotoxin-Hhn1a from Cyriopagopus hainanus (Chinese bird spider).